The primary structure comprises 422 residues: Killer cell immunoglobulin-like receptor 3DL1 (422 aa).

The N-terminal stretch at 1–21 (MMFEFLSLLCSGFFLVQRMSA) is a signal peptide. The Extracellular portion of the chain corresponds to 22–329 (HMGSYDKPFL…KNLHIQIGLL (308 aa)). Ig-like C2-type domains are found at residues 42–100 (GQNV…HHQY), 135–202 (GENV…YNHS), and 237–300 (EQNM…FKNS). Asn44 carries an N-linked (GlcNAc...) asparagine glycan. A disulfide bond links Cys49 and Cys95. Residue Asn137 is glycosylated (N-linked (GlcNAc...) asparagine). Cys142 and Cys195 are joined by a disulfide. N-linked (GlcNAc...) asparagine glycans are attached at residues Asn200 and Asn239. Cys244 and Cys293 form a disulfide bridge. Asn299 carries N-linked (GlcNAc...) asparagine glycosylation. The chain crosses the membrane as a helical span at residues 330 to 350 (VTMVLVIVVIIIIIIIIIIII). Over 351-422 (YYYYFSKKSS…DTVVYTEVMI (72 aa)) the chain is Cytoplasmic.

Belongs to the immunoglobulin superfamily.

The protein localises to the cell membrane. In terms of biological role, receptor on natural killer (NK) cells. Inhibits the activity of NK cells thus preventing cell lysis. This is Killer cell immunoglobulin-like receptor 3DL1 (Kir3dl1) from Rattus norvegicus (Rat).